The following is a 435-amino-acid chain: Serine/threonine-protein kinase 40 (435 aa).

The segment covering 1–10 (MKRRASDRGA) has biased composition (basic and acidic residues). Positions 1–25 (MKRRASDRGAGETSARAKALGSGIS) are disordered. The Protein kinase domain occupies 35–331 (FILGPRLGNS…ADVLEALSAI (297 aa)). Residues 41-49 (LGNSPVPSI) and K66 each bind ATP. R196 serves as the catalytic Proton acceptor.

Belongs to the protein kinase superfamily. CAMK Ser/Thr protein kinase family. Strongly expressed in heart, brain, placenta, lung, skeletal muscle, kidney, spleen, thymus, prostate, liver, pancreas, testis, ovary, small intestine, colon and peripheral blood leukocytes.

It localises to the nucleus. The protein localises to the cytoplasm. It carries out the reaction L-seryl-[protein] + ATP = O-phospho-L-seryl-[protein] + ADP + H(+). The enzyme catalyses L-threonyl-[protein] + ATP = O-phospho-L-threonyl-[protein] + ADP + H(+). Its function is as follows. May be a negative regulator of NF-kappa-B and p53-mediated gene transcription. This Homo sapiens (Human) protein is Serine/threonine-protein kinase 40 (STK40).